We begin with the raw amino-acid sequence, 443 residues long: Methionine aminopeptidase 2-1 (443 aa).

A disordered region spans residues 1–90 (MAAQADDELN…RVPVSELFPN (90 aa)). Residues 33-48 (ADNDDSEDDEKEEEGG) show a composition bias toward acidic residues. Residues 58–73 (KKKKKRKPKKKKKGGA) are compositionally biased toward basic residues. His196 provides a ligand contact to substrate. A divalent metal cation-binding residues include Asp216, Asp227, and His296. A substrate-binding site is contributed by His304. A divalent metal cation contacts are provided by Glu329 and Glu424.

It belongs to the peptidase M24A family. Methionine aminopeptidase eukaryotic type 2 subfamily. The cofactor is Co(2+). Zn(2+) serves as cofactor. Mn(2+) is required as a cofactor. It depends on Fe(2+) as a cofactor.

It is found in the cytoplasm. It catalyses the reaction Release of N-terminal amino acids, preferentially methionine, from peptides and arylamides.. Its function is as follows. Cotranslationally removes the N-terminal methionine from nascent proteins. The N-terminal methionine is often cleaved when the second residue in the primary sequence is small and uncharged (Met-Ala-, Cys, Gly, Pro, Ser, Thr, or Val). This chain is Methionine aminopeptidase 2-1, found in Talaromyces stipitatus (strain ATCC 10500 / CBS 375.48 / QM 6759 / NRRL 1006) (Penicillium stipitatum).